Reading from the N-terminus, the 327-residue chain is Lipoyl synthase (327 aa).

[4Fe-4S] cluster contacts are provided by cysteine 72, cysteine 77, cysteine 83, cysteine 98, cysteine 102, cysteine 105, and serine 313. The region spanning cysteine 83–leucine 302 is the Radical SAM core domain.

Belongs to the radical SAM superfamily. Lipoyl synthase family. [4Fe-4S] cluster serves as cofactor.

It is found in the cytoplasm. It carries out the reaction [[Fe-S] cluster scaffold protein carrying a second [4Fe-4S](2+) cluster] + N(6)-octanoyl-L-lysyl-[protein] + 2 oxidized [2Fe-2S]-[ferredoxin] + 2 S-adenosyl-L-methionine + 4 H(+) = [[Fe-S] cluster scaffold protein] + N(6)-[(R)-dihydrolipoyl]-L-lysyl-[protein] + 4 Fe(3+) + 2 hydrogen sulfide + 2 5'-deoxyadenosine + 2 L-methionine + 2 reduced [2Fe-2S]-[ferredoxin]. It functions in the pathway protein modification; protein lipoylation via endogenous pathway; protein N(6)-(lipoyl)lysine from octanoyl-[acyl-carrier-protein]: step 2/2. Catalyzes the radical-mediated insertion of two sulfur atoms into the C-6 and C-8 positions of the octanoyl moiety bound to the lipoyl domains of lipoate-dependent enzymes, thereby converting the octanoylated domains into lipoylated derivatives. The chain is Lipoyl synthase from Francisella tularensis subsp. holarctica (strain FTNF002-00 / FTA).